A 305-amino-acid chain; its full sequence is Tetraspanin-12 (305 aa).

Residues 1 to 12 (MAREDSVKCLRC) are Cytoplasmic-facing. Residues C9 and C12 are each lipidated (S-palmitoyl cysteine). A helical transmembrane segment spans residues 13 to 33 (LLYALNLLFWLMSISVLAVSA). Residues 34 to 59 (WMRDYLNNVLTLTAETRVEEAVILTY) are Extracellular-facing. A helical transmembrane segment spans residues 60 to 80 (FPVVHPVMIAVCCFLIIVGML). Residues 81–89 (GYCGTVKRN) are Cytoplasmic-facing. C83 is lipidated: S-palmitoyl cysteine. A helical transmembrane segment spans residues 90-110 (LLLLAWYFGTLLVIFCVELAC). At 111 to 224 (GVWTYEQEVM…RGTKQLQVLR (114 aa)) the chain is on the extracellular side. Residues 225-245 (FLGISIGVTQILAMILTITLL) traverse the membrane as a helical segment. Over 246-305 (WALYYDRREPGTDQMLSLKNDTSQHLSCHSVELLKPSLSRIFEHTSMANSFNTHFEMEEL) the chain is Cytoplasmic.

It belongs to the tetraspanin (TM4SF) family. Interacts (when palmitoylated) with ADAM10. Interacts with MMP14/MT1-MMP. Component of a complex, at least composed of TSPAN12, FZD4 and norrin (NDP). In terms of processing, palmitoylated; required for interaction with ADAM10. Expressed in the neonatal retinal vasculature but not other retinal tissues. Also detected in the neonatal meningeal vasculature and in nonvascular cell types, such as the smooth muscle cells in the neonatal intestine.

It is found in the cell membrane. Its function is as follows. Regulator of cell surface receptor signal transduction. Acts as a regulator of membrane proteinases such as ADAM10 and MMP14/MT1-MMP. Activates ADAM10-dependent cleavage activity of amyloid precursor protein (APP). Activates MMP14/MT1-MMP-dependent cleavage activity. Plays a central role in retinal vascularization by regulating norrin (NDP) signal transduction. Acts in concert with norrin (NDP) to promote FZD4 multimerization and subsequent activation of FZD4, leading to promote accumulation of beta-catenin (CTNNB1) and stimulate LEF/TCF-mediated transcriptional programs. Suprisingly, it only activate the norrin (NDP)-dependent activation of FZD4, while it does not activate the Wnt-dependent activation of FZD4, suggesting the existence of a Wnt-independent signaling that also promote accumulation the beta-catenin (CTNNB1). The protein is Tetraspanin-12 (Tspan12) of Mus musculus (Mouse).